The following is a 318-amino-acid chain: Annexin D6 (318 aa).

Ala-2 is modified (N-acetylalanine). Annexin repeat units lie at residues 11–82 (PLPE…LWTL), 83–154 (DPTE…PLVS), 168–239 (KLAR…TAIK), and 243–314 (YPEK…ALLG). Positions 24, 26, 28, and 68 each coordinate Ca(2+). The residue at position 95 (Ser-95) is a Phosphoserine. Phosphothreonine occurs at positions 100 and 112. A Phosphotyrosine modification is found at Tyr-129. Positions 256, 258, and 260 each coordinate Ca(2+). Position 285 is a phosphotyrosine (Tyr-285). The residue at position 290 (Ser-290) is a Phosphoserine. Positions 300 and 301 each coordinate Ca(2+).

The protein belongs to the annexin (TC 1.A.31.1) family. Expressed in flowers.

The polypeptide is Annexin D6 (ANN6) (Arabidopsis thaliana (Mouse-ear cress)).